The sequence spans 153 residues: Myosin regulatory light chain LC-2, mantle muscle (153 aa).

Position 1 is a blocked amino end (Ala) (Ala1). EF-hand domains lie at 13 to 48 (RQMQELKEAFTMIDQDRDGFIGMEDLKDMFSSLGRV) and 82 to 117 (DPEDALRNAFSMFDEDGQGFIPEDYLKDLLENMGDN). Asp26, Asp28, Asp30, and Asp37 together coordinate Ca(2+).

In molluscan muscle, calcium regulation is associated with myosin rather than with actin. Muscle myosin contains two types of light chains: the catalytic light chain, essential for ATPase activity, and the regulatory light chain, a calcium-binding protein responsible for Ca(2+) dependent binding and Ca(2+) dependent Mg-ATPase activity. The chain is Myosin regulatory light chain LC-2, mantle muscle from Todarodes pacificus (Japanese flying squid).